We begin with the raw amino-acid sequence, 302 residues long: Protoheme IX farnesyltransferase 1 (302 aa).

Helical transmembrane passes span 27-47 (VVAL…VTDF), 49-69 (WIQA…AAAF), 98-118 (SVAI…YAWV), 121-141 (LTAW…TMYL), 149-169 (IVIA…AVTG), 175-195 (AWLL…ALAI), 228-248 (LLTL…IYLF), and 281-301 (IYHL…GMVL).

The protein belongs to the UbiA prenyltransferase family. Protoheme IX farnesyltransferase subfamily.

It is found in the cell inner membrane. The enzyme catalyses heme b + (2E,6E)-farnesyl diphosphate + H2O = Fe(II)-heme o + diphosphate. It functions in the pathway porphyrin-containing compound metabolism; heme O biosynthesis; heme O from protoheme: step 1/1. In terms of biological role, converts heme B (protoheme IX) to heme O by substitution of the vinyl group on carbon 2 of heme B porphyrin ring with a hydroxyethyl farnesyl side group. In Vibrio parahaemolyticus serotype O3:K6 (strain RIMD 2210633), this protein is Protoheme IX farnesyltransferase 1.